Consider the following 363-residue polypeptide: Phosphoserine aminotransferase (363 aa).

Arg-42 serves as a coordination point for L-glutamate. Pyridoxal 5'-phosphate-binding positions include 76-77, Trp-101, Thr-151, Asp-170, and Gln-193; that span reads AS. Lys-194 carries the post-translational modification N6-(pyridoxal phosphate)lysine. 234 to 235 is a binding site for pyridoxal 5'-phosphate; it reads NT.

This sequence belongs to the class-V pyridoxal-phosphate-dependent aminotransferase family. SerC subfamily. Homodimer. Pyridoxal 5'-phosphate serves as cofactor.

Its subcellular location is the cytoplasm. It catalyses the reaction O-phospho-L-serine + 2-oxoglutarate = 3-phosphooxypyruvate + L-glutamate. The catalysed reaction is 4-(phosphooxy)-L-threonine + 2-oxoglutarate = (R)-3-hydroxy-2-oxo-4-phosphooxybutanoate + L-glutamate. It functions in the pathway amino-acid biosynthesis; L-serine biosynthesis; L-serine from 3-phospho-D-glycerate: step 2/3. Its function is as follows. Catalyzes the reversible conversion of 3-phosphohydroxypyruvate to phosphoserine and of 3-hydroxy-2-oxo-4-phosphonooxybutanoate to phosphohydroxythreonine. The polypeptide is Phosphoserine aminotransferase (Listeria monocytogenes serovar 1/2a (strain ATCC BAA-679 / EGD-e)).